A 414-amino-acid chain; its full sequence is Serine/threonine transporter SstT (414 aa).

The next 8 membrane-spanning stretches (helical) occupy residues G22–F42, I54–A74, I89–F109, A148–L168, I189–L209, L223–V243, M305–L325, and I337–I357.

Belongs to the dicarboxylate/amino acid:cation symporter (DAACS) (TC 2.A.23) family.

The protein resides in the cell inner membrane. The catalysed reaction is L-serine(in) + Na(+)(in) = L-serine(out) + Na(+)(out). It catalyses the reaction L-threonine(in) + Na(+)(in) = L-threonine(out) + Na(+)(out). Its function is as follows. Involved in the import of serine and threonine into the cell, with the concomitant import of sodium (symport system). The polypeptide is Serine/threonine transporter SstT (Haemophilus influenzae (strain PittEE)).